We begin with the raw amino-acid sequence, 784 residues long: LPS-assembly protein LptD (784 aa).

Positions 1-24 are cleaved as a signal peptide; it reads MKKRIPTLLATMIATALYSQQGLA. Intrachain disulfides connect Cys31-Cys724 and Cys173-Cys725.

It belongs to the LptD family. Component of the lipopolysaccharide transport and assembly complex. Interacts with LptE and LptA. May interact with LptE during assembly of LptD by the beta-barrel assembly machine (BAM). Also interacts with LptM, which promotes the efficient assembly of the LptDE translocon by the BAM complex. Contains two intramolecular disulfide bonds. At least one disulfide bond is required for activity, and protein is probably fully oxidized in vivo.

It is found in the cell outer membrane. Together with LptE, is involved in the assembly of lipopolysaccharide (LPS) at the surface of the outer membrane. Contributes to n-hexane resistance. This chain is LPS-assembly protein LptD, found in Escherichia coli (strain K12).